A 501-amino-acid polypeptide reads, in one-letter code: Ribose import ATP-binding protein RbsA (501 aa).

ABC transporter domains are found at residues 5 to 241 (LSLE…VGRK) and 252 to 498 (LRND…TGGV). Residue 37–44 (GENGAGKS) coordinates ATP.

The protein belongs to the ABC transporter superfamily. Ribose importer (TC 3.A.1.2.1) family. As to quaternary structure, the complex is composed of an ATP-binding protein (RbsA), two transmembrane proteins (RbsC) and a solute-binding protein (RbsB).

The protein localises to the cell inner membrane. It carries out the reaction D-ribose(out) + ATP + H2O = D-ribose(in) + ADP + phosphate + H(+). Part of the ABC transporter complex RbsABC involved in ribose import. Responsible for energy coupling to the transport system. This chain is Ribose import ATP-binding protein RbsA, found in Hahella chejuensis (strain KCTC 2396).